A 124-amino-acid polypeptide reads, in one-letter code: uncharacterized protein (124 aa).

Its subcellular location is the cytoplasm. It localises to the nucleus. This is an uncharacterized protein from Schizosaccharomyces pombe (strain 972 / ATCC 24843) (Fission yeast).